The chain runs to 329 residues: Malate dehydrogenase (329 aa).

12-18 contributes to the NAD(+) binding site; it reads GAAGQIG. Arginine 93 and arginine 99 together coordinate substrate. NAD(+)-binding positions include asparagine 106, glutamine 113, and 130-132; that span reads VGN. Asparagine 132 and arginine 163 together coordinate substrate. Histidine 188 functions as the Proton acceptor in the catalytic mechanism.

It belongs to the LDH/MDH superfamily. MDH type 2 family.

The enzyme catalyses (S)-malate + NAD(+) = oxaloacetate + NADH + H(+). Its function is as follows. Catalyzes the reversible oxidation of malate to oxaloacetate. The chain is Malate dehydrogenase from Streptomyces griseus subsp. griseus (strain JCM 4626 / CBS 651.72 / NBRC 13350 / KCC S-0626 / ISP 5235).